Here is a 142-residue protein sequence, read N- to C-terminus: MSGTGLSLFVTGLILNCLNSICQIYFTILYGDLEADYINSIELCKRVNRLSVPEAILQAFISALFLFNGYWFVFLLNVPVLAYNASKVYKKTHLLDATDIFRKLGRCKIECFLKLGFYLLIFFFYFYRMVTALLENDANLIS.

The Cytoplasmic segment spans residues M1–S7. The chain crosses the membrane as a helical span at residues L8–I28. The Extracellular segment spans residues L29 to A55. A helical membrane pass occupies residues I56–L76. Residues N77–K114 are Cytoplasmic-facing. A helical membrane pass occupies residues L115–E135. Residues N136 to S142 lie on the Extracellular side of the membrane.

The protein belongs to the cornichon family.

It is found in the membrane. The chain is ER-derived vesicles protein ERV15 (ERV15) from Saccharomyces cerevisiae (strain ATCC 204508 / S288c) (Baker's yeast).